The sequence spans 301 residues: Ribosomal protein L11 methyltransferase (301 aa).

Residues Thr-146, Gly-167, Asp-189, and Asn-234 each contribute to the S-adenosyl-L-methionine site.

This sequence belongs to the methyltransferase superfamily. PrmA family.

It localises to the cytoplasm. The enzyme catalyses L-lysyl-[protein] + 3 S-adenosyl-L-methionine = N(6),N(6),N(6)-trimethyl-L-lysyl-[protein] + 3 S-adenosyl-L-homocysteine + 3 H(+). Its function is as follows. Methylates ribosomal protein L11. The chain is Ribosomal protein L11 methyltransferase from Acinetobacter baumannii (strain AB307-0294).